A 353-amino-acid chain; its full sequence is uncharacterized protein (353 aa).

Residues C40, H70, C100, C103, C106, C114, and C158 each coordinate Zn(2+).

Belongs to the zinc-containing alcohol dehydrogenase family. The cofactor is Zn(2+).

This is an uncharacterized protein from Escherichia coli (strain K12).